The sequence spans 349 residues: 4-hydroxy-2-oxovalerate aldolase 2 (349 aa).

The Pyruvate carboxyltransferase domain maps to 12-264 (VRMTDTSLRD…KTGIDFFDIA (253 aa)). 20 to 21 (RD) is a binding site for substrate. Asp21 contributes to the Mn(2+) binding site. Residue His24 is the Proton acceptor of the active site. Residues Ser174 and His203 each coordinate substrate. Mn(2+)-binding residues include His203 and His205. Tyr294 is a substrate binding site.

Belongs to the 4-hydroxy-2-oxovalerate aldolase family.

It catalyses the reaction (S)-4-hydroxy-2-oxopentanoate = acetaldehyde + pyruvate. This chain is 4-hydroxy-2-oxovalerate aldolase 2 (bphI-2), found in Mycolicibacterium smegmatis (strain ATCC 700084 / mc(2)155) (Mycobacterium smegmatis).